Reading from the N-terminus, the 182-residue chain is UPF0397 protein BCG9842_B2659 (182 aa).

The next 5 helical transmembrane spans lie at 9–29, 40–60, 71–91, 114–134, and 142–162; these read VVAIGIGAALYGILGLWGFSI, AILTVFGALFGPVAGLLIGLI, WGIWWGWVISSGIIGFSMGLI, ITGLVGIVIAIIFAGAFDIIV, and IVIQVLGATISDVIVFLVLGL.

The protein belongs to the UPF0397 family.

It is found in the cell membrane. The chain is UPF0397 protein BCG9842_B2659 from Bacillus cereus (strain G9842).